The following is a 92-amino-acid chain: DNA-directed RNA polymerase subunit Rpo11 (92 aa).

This sequence belongs to the archaeal Rpo11/eukaryotic RPB11/RPC19 RNA polymerase subunit family. In terms of assembly, part of the RNA polymerase complex.

It is found in the cytoplasm. The catalysed reaction is RNA(n) + a ribonucleoside 5'-triphosphate = RNA(n+1) + diphosphate. In terms of biological role, DNA-dependent RNA polymerase (RNAP) catalyzes the transcription of DNA into RNA using the four ribonucleoside triphosphates as substrates. The polypeptide is DNA-directed RNA polymerase subunit Rpo11 (Saccharolobus islandicus (strain Y.N.15.51 / Yellowstone #2) (Sulfolobus islandicus)).